The primary structure comprises 348 residues: D-erythrose-4-phosphate dehydrogenase (348 aa).

12–13 (RI) contacts NAD(+). Substrate contacts are provided by residues 154–156 (SCT), Arg200, 213–214 (TR), and Arg236. Residue Cys155 is the Nucleophile of the active site. Position 318 (Asn318) interacts with NAD(+).

Belongs to the glyceraldehyde-3-phosphate dehydrogenase family. Epd subfamily. As to quaternary structure, homotetramer.

Its subcellular location is the cytoplasm. It catalyses the reaction D-erythrose 4-phosphate + NAD(+) + H2O = 4-phospho-D-erythronate + NADH + 2 H(+). The protein operates within cofactor biosynthesis; pyridoxine 5'-phosphate biosynthesis; pyridoxine 5'-phosphate from D-erythrose 4-phosphate: step 1/5. Functionally, catalyzes the NAD-dependent conversion of D-erythrose 4-phosphate to 4-phosphoerythronate. In Erwinia tasmaniensis (strain DSM 17950 / CFBP 7177 / CIP 109463 / NCPPB 4357 / Et1/99), this protein is D-erythrose-4-phosphate dehydrogenase.